Reading from the N-terminus, the 73-residue chain is Small ribosomal subunit protein bS18c (73 aa).

It belongs to the bacterial ribosomal protein bS18 family. As to quaternary structure, part of the 30S ribosomal subunit.

It is found in the plastid. It localises to the chloroplast. This Guillardia theta (Cryptophyte) protein is Small ribosomal subunit protein bS18c (rps18).